Here is an 878-residue protein sequence, read N- to C-terminus: Staphylococcal nuclease domain-containing protein 1 (878 aa).

2 TNase-like domains span residues 3-142 (QYVS…IWGP) and 167-312 (KKLN…IWKN). Ser316 bears the Phosphoserine mark. 2 consecutive TNase-like domains span residues 326-464 (KDYS…MWSG) and 493-626 (RKLS…MWHD). Residues 695–755 (KINVGMNVAA…SSLPDTYTKL (61 aa)) enclose the Tudor domain.

The protein localises to the cytoplasm. It is found in the cytosol. The polypeptide is Staphylococcal nuclease domain-containing protein 1 (Schizosaccharomyces pombe (strain 972 / ATCC 24843) (Fission yeast)).